Reading from the N-terminus, the 547-residue chain is uncharacterized protein (547 aa).

Over residues 38–50 the composition is skewed to basic and acidic residues; that stretch reads RNLPFHREREKVE. A disordered region spans residues 38-89; the sequence is RNLPFHREREKVESNPNSSDEEDLTSTNNTRSSDNTTSDTEDDSGEDSYQVE. Positions 62 to 75 are enriched in low complexity; the sequence is TSTNNTRSSDNTTS. A run of 12 helical transmembrane segments spans residues 108–128, 148–168, 174–194, 197–217, 233–253, 265–285, 346–366, 377–397, 418–438, 445–465, 478–500, and 514–534; these read IYTL…SSIF, LCSA…APLS, LPLY…GGCS, IWSL…PMSA, GALL…PVMG, WDFW…CFTM, MYLV…PLIF, GLAI…TPII, LFPL…LGWT, WAAP…VLAV, AASA…TIVA, and SLLA…FFWG.

This sequence belongs to the major facilitator superfamily. CAR1 family.

The protein resides in the membrane. This is an uncharacterized protein from Schizosaccharomyces pombe (strain 972 / ATCC 24843) (Fission yeast).